The sequence spans 492 residues: Probable malate:quinone oxidoreductase 1 (492 aa).

Belongs to the MQO family. It depends on FAD as a cofactor.

The catalysed reaction is (S)-malate + a quinone = a quinol + oxaloacetate. It participates in carbohydrate metabolism; tricarboxylic acid cycle; oxaloacetate from (S)-malate (quinone route): step 1/1. This Staphylococcus aureus (strain MRSA252) protein is Probable malate:quinone oxidoreductase 1.